The sequence spans 114 residues: UPF0342 protein SERP1381 (114 aa).

It belongs to the UPF0342 family.

This is UPF0342 protein SERP1381 from Staphylococcus epidermidis (strain ATCC 35984 / DSM 28319 / BCRC 17069 / CCUG 31568 / BM 3577 / RP62A).